The primary structure comprises 103 residues: Spherulin-3A (103 aa).

The N-terminal arm stretch occupies residues 1 to 13 (MSVCKGVSGNPAK). 2 consecutive Beta/gamma crystallin 'Greek key' domains span residues 14 to 55 (GEVF…KVGP) and 57 to 99 (TKAF…IVAT).

Belongs to the beta/gamma-crystallin family.

The protein resides in the cytoplasm. Its function is as follows. Structural protein. In Physarum polycephalum (Slime mold), this protein is Spherulin-3A.